The chain runs to 465 residues: Gamma-aminobutyric acid receptor subunit rho-2 (465 aa).

Residues 1–20 form the signal peptide; it reads MPYLMRLALVLFCLMALVES. The Extracellular segment spans residues 21 to 260; that stretch reads RKPRRKRWTG…LYINFTLRRH (240 aa). Residue Arg-105 participates in 4-aminobutanoate binding. Asn-120 carries an N-linked (GlcNAc...) asparagine glycan. A 4-aminobutanoate-binding site is contributed by Ser-169. Residues Cys-178 and Cys-192 are joined by a disulfide bond. Glu-197 contacts 4-aminobutanoate. Residue Asn-254 is glycosylated (N-linked (GlcNAc...) asparagine). A helical transmembrane segment spans residues 261-281; sequence IFFFLLQTYFPATLMVMLSWV. Residues 282–293 are Cytoplasmic-facing; that stretch reads SFWIDHRAVPAR. A helical transmembrane segment spans residues 294–314; the sequence is VSLGIMTVLTMSTIITGVNAS. The Extracellular portion of the chain corresponds to 315 to 325; it reads MPRVSYIRAVD. A helical membrane pass occupies residues 326–346; the sequence is IYLWVSFVFVFLSVLEYAAVN. Residues 347-443 are Cytoplasmic-facing; it reads YLTTLQEQKE…IFQNTHAIDK (97 aa). Residues 444-464 traverse the membrane as a helical segment; the sequence is YSRLIFPAFYIVFNLIYWSVF. Residue Ser-465 is a topological domain, extracellular.

Belongs to the ligand-gated ion channel (TC 1.A.9) family. Gamma-aminobutyric acid receptor (TC 1.A.9.5) subfamily. GABRR2 sub-subfamily. As to quaternary structure, three rho subunits (rho-1/GBRR1, rho-2/GBRR2 and rho-3/GBRR3) coassemble either to form functional homopentamers or heteropentamers. Rho-2 is unable to form a functional homopentamer. Interacts with SQSTM1. As to expression, expressed in the cerebellum.

The protein resides in the postsynaptic cell membrane. The protein localises to the cell membrane. The enzyme catalyses chloride(in) = chloride(out). Functionally, rho subunit of the pentameric ligand-gated chloride channels responsible for mediating the effects of gamma-aminobutyric acid (GABA), the major inhibitory neurotransmitter in the brain. Rho-containing GABA-gated chloride channels are a subclass of GABA(A) receptors (GABAARs) entirely composed of rho subunits, where GABA molecules bind at the rho intersubunit interfaces. When activated by GABA, rho-GABAARs selectively allow the flow of chloride anions across the cell membrane down their electrochemical gradient. Rho-2 GABAARs may contribute to the regulation of glial development in the cerebellum by controlling extrasynaptic transmission. Rho-2 GABAARs are also involved in neuronal tonic (extrasynaptic) and phasic (synaptic) transmission in the Purkinje neurons of the cerebellum. Rho-2 GABAARs expressed in retina may play a role in retinal neurotransmission. The protein is Gamma-aminobutyric acid receptor subunit rho-2 of Mus musculus (Mouse).